The chain runs to 176 residues: MTVWLLIGFLLPVAIFAAPPINRLALFPDKSAWCEAKNITQIVGHSGCESKSIQNRACLGQCFSYSVPNTFPQSTESLVHCDSCMPIDSVWDVVTLECPGNEEFPRVDKLVEKILQCSCQACGKELSQEGAMFNVYLNTAEETLSPAETLGHHHHRPPAREEDSPAQSQREGESEE.

The N-terminal stretch at 1 to 17 is a signal peptide; the sequence is MTVWLLIGFLLPVAIFA. 5 disulfide bridges follow: cysteine 34-cysteine 84, cysteine 48-cysteine 98, cysteine 58-cysteine 117, cysteine 62-cysteine 119, and cysteine 81-cysteine 122. A CTCK domain is found at 34-123; the sequence is CEAKNITQIV…ILQCSCQACG (90 aa). The tract at residues 148-176 is disordered; sequence ETLGHHHHRPPAREEDSPAQSQREGESEE.

It belongs to the DAN family. In terms of assembly, interacts with bmp2; the interaction is blocked in presence of nog.

It localises to the secreted. Its function is as follows. May act as a tumor suppressor. Cytokine that has an axial patterning activity. Acts like bone morpho-genetic protein (BMP) antagonist in embryonic explants. Blocks the bmp2 activity. This is Neuroblastoma suppressor of tumorigenicity 1 (nbl1) from Xenopus tropicalis (Western clawed frog).